Reading from the N-terminus, the 224-residue chain is Ribosomal RNA small subunit methyltransferase G (224 aa).

Residues G89, L94, I140–E141, and R154 contribute to the S-adenosyl-L-methionine site.

It belongs to the methyltransferase superfamily. RNA methyltransferase RsmG family.

It is found in the cytoplasm. The enzyme catalyses guanosine(527) in 16S rRNA + S-adenosyl-L-methionine = N(7)-methylguanosine(527) in 16S rRNA + S-adenosyl-L-homocysteine. In terms of biological role, specifically methylates the N7 position of guanine in position 527 of 16S rRNA. This Bordetella avium (strain 197N) protein is Ribosomal RNA small subunit methyltransferase G.